A 469-amino-acid chain; its full sequence is Argininosuccinate lyase (469 aa).

This sequence belongs to the lyase 1 family. Argininosuccinate lyase subfamily.

The protein resides in the cytoplasm. It carries out the reaction 2-(N(omega)-L-arginino)succinate = fumarate + L-arginine. It functions in the pathway amino-acid biosynthesis; L-arginine biosynthesis; L-arginine from L-ornithine and carbamoyl phosphate: step 3/3. In Polaromonas naphthalenivorans (strain CJ2), this protein is Argininosuccinate lyase.